The sequence spans 351 residues: Histidine protein kinase SaeS (351 aa).

The next 2 helical transmembrane spans lie at 9–29 (IIIG…IAYI) and 40–60 (TLTL…SIFI). The HAMP domain maps to 61–114 (NPLIQKIKQFNIKTKQFANGNYASNDKTFNSPKEIYELNQSFNKMASEITQQMN). The 220-residue stretch at 129–348 (NLAHDLKTPL…TMTVTLHKLD (220 aa)) folds into the Histidine kinase domain. Position 132 is a phosphohistidine; by autocatalysis (His132).

Autophosphorylated.

It localises to the cell membrane. The enzyme catalyses ATP + protein L-histidine = ADP + protein N-phospho-L-histidine.. Functionally, member of the two-component regulatory system SaeR/SaeS involved in the regulation of staphylococcal virulence factors in a strain-dependent fashion. Probably functions as a membrane-associated protein kinase that upon sensing the appropriate signal, autophosphorylates and in turn activates the cytosolic response regulator SaeR. The chain is Histidine protein kinase SaeS (saeS) from Staphylococcus aureus (strain MRSA252).